The chain runs to 213 residues: ATP phosphoribosyltransferase (213 aa).

It belongs to the ATP phosphoribosyltransferase family. Short subfamily. As to quaternary structure, heteromultimer composed of HisG and HisZ subunits.

The protein localises to the cytoplasm. The enzyme catalyses 1-(5-phospho-beta-D-ribosyl)-ATP + diphosphate = 5-phospho-alpha-D-ribose 1-diphosphate + ATP. Its pathway is amino-acid biosynthesis; L-histidine biosynthesis; L-histidine from 5-phospho-alpha-D-ribose 1-diphosphate: step 1/9. Catalyzes the condensation of ATP and 5-phosphoribose 1-diphosphate to form N'-(5'-phosphoribosyl)-ATP (PR-ATP). Has a crucial role in the pathway because the rate of histidine biosynthesis seems to be controlled primarily by regulation of HisG enzymatic activity. This Listeria innocua serovar 6a (strain ATCC BAA-680 / CLIP 11262) protein is ATP phosphoribosyltransferase (hisG).